The chain runs to 719 residues: UvrABC system protein B (719 aa).

The Helicase ATP-binding domain occupies 49–435 (RRINAGERDV…TGGEFVEQVI (387 aa)). 62-69 (GATGTGKS) contributes to the ATP binding site. A Beta-hairpin motif is present at residues 115-138 (YYDYYQPEAYIAQTDTYIEKDSSI). The 154-residue stretch at 453–606 (QIDDLIGEIR…QIAYNEANGI (154 aa)) folds into the Helicase C-terminal domain. A disordered region spans residues 635–654 (GGSGRNASRGRRAQGEPGRA). The 36-residue stretch at 674-709 (ADLIKDLTAQMMAAARDLQFELAARFRDEIADLKRE) folds into the UVR domain.

The protein belongs to the UvrB family. In terms of assembly, forms a heterotetramer with UvrA during the search for lesions. Interacts with UvrC in an incision complex.

The protein localises to the cytoplasm. In terms of biological role, the UvrABC repair system catalyzes the recognition and processing of DNA lesions. A damage recognition complex composed of 2 UvrA and 2 UvrB subunits scans DNA for abnormalities. Upon binding of the UvrA(2)B(2) complex to a putative damaged site, the DNA wraps around one UvrB monomer. DNA wrap is dependent on ATP binding by UvrB and probably causes local melting of the DNA helix, facilitating insertion of UvrB beta-hairpin between the DNA strands. Then UvrB probes one DNA strand for the presence of a lesion. If a lesion is found the UvrA subunits dissociate and the UvrB-DNA preincision complex is formed. This complex is subsequently bound by UvrC and the second UvrB is released. If no lesion is found, the DNA wraps around the other UvrB subunit that will check the other stand for damage. This chain is UvrABC system protein B, found in Mycobacterium tuberculosis (strain CDC 1551 / Oshkosh).